The sequence spans 204 residues: FMN-dependent NADH:quinone oxidoreductase 2 (204 aa).

FMN is bound by residues S10 and 16–18; that span reads SIS.

This sequence belongs to the azoreductase type 1 family. Homodimer. FMN serves as cofactor.

It catalyses the reaction 2 a quinone + NADH + H(+) = 2 a 1,4-benzosemiquinone + NAD(+). The catalysed reaction is N,N-dimethyl-1,4-phenylenediamine + anthranilate + 2 NAD(+) = 2-(4-dimethylaminophenyl)diazenylbenzoate + 2 NADH + 2 H(+). Quinone reductase that provides resistance to thiol-specific stress caused by electrophilic quinones. Its function is as follows. Also exhibits azoreductase activity. Catalyzes the reductive cleavage of the azo bond in aromatic azo compounds to the corresponding amines. The chain is FMN-dependent NADH:quinone oxidoreductase 2 from Jannaschia sp. (strain CCS1).